The sequence spans 324 residues: Adenine deaminase (324 aa).

Residues H11, H13, and H189 each coordinate Zn(2+). E192 (proton donor) is an active-site residue. Zn(2+) is bound at residue D270. Substrate is bound at residue D271.

This sequence belongs to the metallo-dependent hydrolases superfamily. Adenosine and AMP deaminases family. Adenine deaminase type 2 subfamily. Zn(2+) serves as cofactor.

It carries out the reaction adenine + H2O + H(+) = hypoxanthine + NH4(+). Catalyzes the hydrolytic deamination of adenine to hypoxanthine. Plays an important role in the purine salvage pathway and in nitrogen catabolism. This Sinorhizobium medicae (strain WSM419) (Ensifer medicae) protein is Adenine deaminase.